A 357-amino-acid polypeptide reads, in one-letter code: DNA integrity scanning protein DisA (357 aa).

The DAC domain maps to 9–147 (DRKLLEILKT…DDIKYILRDS (139 aa)). ATP is bound by residues glycine 76, leucine 94, and 107-111 (TRHRT).

Belongs to the DisA family. In terms of assembly, homooctamer. Mg(2+) serves as cofactor.

It carries out the reaction 2 ATP = 3',3'-c-di-AMP + 2 diphosphate. In terms of biological role, participates in a DNA-damage check-point that is active prior to asymmetric division when DNA is damaged. DisA forms globular foci that rapidly scan along the chromosomes during sporulation, searching for lesions. When a lesion is present, DisA pauses at the lesion site. This triggers a cellular response that culminates in a temporary block in sporulation initiation. Also has diadenylate cyclase activity, catalyzing the condensation of 2 ATP molecules into cyclic di-AMP (c-di-AMP). c-di-AMP acts as a signaling molecule that couples DNA integrity with progression of sporulation. The rise in c-di-AMP level generated by DisA while scanning the chromosome, operates as a positive signal that advances sporulation; upon encountering a lesion, the DisA focus arrests at the damaged site and halts c-di-AMP synthesis. The sequence is that of DNA integrity scanning protein DisA from Clostridium acetobutylicum (strain ATCC 824 / DSM 792 / JCM 1419 / IAM 19013 / LMG 5710 / NBRC 13948 / NRRL B-527 / VKM B-1787 / 2291 / W).